Consider the following 385-residue polypeptide: Probable nitrate transporter NarT (385 aa).

12 consecutive transmembrane segments (helical) span residues 14 to 34 (TLSLVVGFMAWSIISPLMPYI), 47 to 67 (IILAIPVILGSILRVPFGYLT), 69 to 89 (IIGAKWVFFCSFVILLFPIFF), 97 to 117 (GMLMLSGFFLGVGGAIFSVGV), 139 to 159 (GNIGTAVSSFLAPPIAGIIGW), 161 to 181 (TTVRSYLIIIAIFAILMFIFG), 205 to 225 (LYYLSLWYFITFGAFVAFGLF), 246 to 266 (GVFIALATFLRPIGGILGDKF), 277 to 297 (IIMIVGAVILGISSHIALFTI), 302 to 322 (ISICAGLGNGLIFKLVPSYFA), 330 to 350 (GIVSMMGGLGGFFPPLVITYV), and 359 to 379 (LAFILLAIFGVLAFITMGHLY).

The protein belongs to the major facilitator superfamily. Nitrate/nitrite porter (TC 2.A.1.8) family.

The protein localises to the cell membrane. Its function is as follows. Probably required for nitrate uptake under anoxic conditions. Also possibly involved in excretion of nitrite produced by the dissimilatory reduction of nitrate. In Staphylococcus haemolyticus (strain JCSC1435), this protein is Probable nitrate transporter NarT (narT).